We begin with the raw amino-acid sequence, 360 residues long: Protein Wnt-2 (360 aa).

Positions 1-25 (MNAPLGGIWLWLPLLLTWLTPEVNS) are cleaved as a signal peptide. Disulfide bonds link C76-C87, C127-C135, C137-C157, C206-C220, C208-C215, C278-C309, C294-C304, C308-C348, C324-C339, C326-C336, and C331-C332. Residue S212 is the site of O-palmitoleoyl serine; by PORCN attachment. Residue N295 is glycosylated (N-linked (GlcNAc...) asparagine).

Belongs to the Wnt family. In terms of processing, palmitoleoylation is required for efficient binding to frizzled receptors. Depalmitoleoylation leads to Wnt signaling pathway inhibition.

The protein resides in the secreted. It localises to the extracellular space. Its subcellular location is the extracellular matrix. Functionally, ligand for members of the frizzled family of seven transmembrane receptors. Functions in the canonical Wnt signaling pathway that results in activation of transcription factors of the TCF/LEF family. Functions as a upstream regulator of FGF10 expression. Plays an important role in embryonic lung development. May contribute to embryonic brain development by regulating the proliferation of dopaminergic precursors and neurons. In Nomascus leucogenys (Northern white-cheeked gibbon), this protein is Protein Wnt-2 (WNT2).